A 470-amino-acid chain; its full sequence is Siroheme synthase (470 aa).

Residues 1-201 are precorrin-2 dehydrogenase /sirohydrochlorin ferrochelatase; it reads MDYFPIFCQL…NDHVQADQHV (201 aa). NAD(+)-binding positions include 22–23 and 43–44; these read EI and CE. Phosphoserine is present on S128. The interval 213-470 is uroporphyrinogen-III C-methyltransferase; that stretch reads GEVVLVGAGP…KVTECVAHVG (258 aa). P222 serves as a coordination point for S-adenosyl-L-methionine. D245 acts as the Proton acceptor in catalysis. The active-site Proton donor is the K267. S-adenosyl-L-methionine contacts are provided by residues 298–300, I303, 328–329, M379, and G408; these read GGD and TA.

This sequence in the N-terminal section; belongs to the precorrin-2 dehydrogenase / sirohydrochlorin ferrochelatase family. It in the C-terminal section; belongs to the precorrin methyltransferase family.

The enzyme catalyses uroporphyrinogen III + 2 S-adenosyl-L-methionine = precorrin-2 + 2 S-adenosyl-L-homocysteine + H(+). It carries out the reaction precorrin-2 + NAD(+) = sirohydrochlorin + NADH + 2 H(+). It catalyses the reaction siroheme + 2 H(+) = sirohydrochlorin + Fe(2+). It functions in the pathway cofactor biosynthesis; adenosylcobalamin biosynthesis; precorrin-2 from uroporphyrinogen III: step 1/1. Its pathway is cofactor biosynthesis; adenosylcobalamin biosynthesis; sirohydrochlorin from precorrin-2: step 1/1. It participates in porphyrin-containing compound metabolism; siroheme biosynthesis; precorrin-2 from uroporphyrinogen III: step 1/1. The protein operates within porphyrin-containing compound metabolism; siroheme biosynthesis; siroheme from sirohydrochlorin: step 1/1. It functions in the pathway porphyrin-containing compound metabolism; siroheme biosynthesis; sirohydrochlorin from precorrin-2: step 1/1. Its function is as follows. Multifunctional enzyme that catalyzes the SAM-dependent methylations of uroporphyrinogen III at position C-2 and C-7 to form precorrin-2 via precorrin-1. Then it catalyzes the NAD-dependent ring dehydrogenation of precorrin-2 to yield sirohydrochlorin. Finally, it catalyzes the ferrochelation of sirohydrochlorin to yield siroheme. In Yersinia pestis, this protein is Siroheme synthase.